The primary structure comprises 187 residues: Elongation factor P (187 aa).

This sequence belongs to the elongation factor P family.

Its subcellular location is the cytoplasm. Its pathway is protein biosynthesis; polypeptide chain elongation. In terms of biological role, involved in peptide bond synthesis. Stimulates efficient translation and peptide-bond synthesis on native or reconstituted 70S ribosomes in vitro. Probably functions indirectly by altering the affinity of the ribosome for aminoacyl-tRNA, thus increasing their reactivity as acceptors for peptidyl transferase. The sequence is that of Elongation factor P from Jannaschia sp. (strain CCS1).